The chain runs to 101 residues: Small ribosomal subunit protein uS14 (101 aa).

The protein belongs to the universal ribosomal protein uS14 family. In terms of assembly, part of the 30S ribosomal subunit. Contacts proteins S3 and S10.

Its function is as follows. Binds 16S rRNA, required for the assembly of 30S particles and may also be responsible for determining the conformation of the 16S rRNA at the A site. This is Small ribosomal subunit protein uS14 from Chlamydia caviae (strain ATCC VR-813 / DSM 19441 / 03DC25 / GPIC) (Chlamydophila caviae).